Reading from the N-terminus, the 211-residue chain is FMN-dependent NADH:quinone oxidoreductase 2 (211 aa).

FMN-binding positions include Ser10 and 17 to 19 (SRS).

Belongs to the azoreductase type 1 family. In terms of assembly, homodimer. It depends on FMN as a cofactor.

It catalyses the reaction 2 a quinone + NADH + H(+) = 2 a 1,4-benzosemiquinone + NAD(+). It carries out the reaction N,N-dimethyl-1,4-phenylenediamine + anthranilate + 2 NAD(+) = 2-(4-dimethylaminophenyl)diazenylbenzoate + 2 NADH + 2 H(+). In terms of biological role, quinone reductase that provides resistance to thiol-specific stress caused by electrophilic quinones. Functionally, also exhibits azoreductase activity. Catalyzes the reductive cleavage of the azo bond in aromatic azo compounds to the corresponding amines. The protein is FMN-dependent NADH:quinone oxidoreductase 2 of Listeria monocytogenes serovar 1/2a (strain ATCC BAA-679 / EGD-e).